The chain runs to 510 residues: Serine carboxypeptidase-like 48 (510 aa).

Positions 1-25 (MDSKTTFLTFLLCIFIFSHFSPSTS) are cleaved as a signal peptide. Intrachain disulfides connect Cys-141–Cys-383, Cys-309–Cys-326, and Cys-349–Cys-354. N-linked (GlcNAc...) asparagine glycosylation is found at Asn-158 and Asn-159. Residue Ser-231 is part of the active site. Catalysis depends on residues Asp-421 and His-478.

The protein belongs to the peptidase S10 family. As to expression, ubiquitous.

The protein resides in the secreted. Functionally, probable carboxypeptidase. The protein is Serine carboxypeptidase-like 48 (SCPL48) of Arabidopsis thaliana (Mouse-ear cress).